The primary structure comprises 592 residues: Beta-fructofuranosidase, insoluble isoenzyme 2 (592 aa).

Residues 1–40 (MLIRCFHIKMALVTCFHSMLFLSAVVFIFSLDVNIRGVEA) form the signal peptide. Aspartate 75 is an active-site residue. N-linked (GlcNAc...) asparagine glycosylation is found at asparagine 171, asparagine 195, asparagine 310, asparagine 347, and asparagine 568.

This sequence belongs to the glycosyl hydrolase 32 family.

It is found in the secreted. The protein resides in the cell wall. It carries out the reaction Hydrolysis of terminal non-reducing beta-D-fructofuranoside residues in beta-D-fructofuranosides.. In terms of biological role, may play an important role in phloem unloading and in stress response. This is Beta-fructofuranosidase, insoluble isoenzyme 2 (INV2) from Daucus carota (Wild carrot).